A 224-amino-acid chain; its full sequence is Mannose-specific lectin 3 (224 aa).

Bulb-type lectin domains follow at residues 2 to 111 and 117 to 222; these read NNVL…PAAA and RNVL…VWST. 2 disulfide bridges follow: C30–C52 and C145–C170.

As to quaternary structure, heterotetramer of 2 domain 1 and 2 domain 2 chains arranged as a dimer of domain 1/domain 2 heterodimers.

Its function is as follows. Mannose-specific lectin. Has weak agglutinating activity towards trypsin-treated erythrocytes from rabbit but not from human. This Crocus vernus (Dutch crocus) protein is Mannose-specific lectin 3.